The chain runs to 260 residues: MDRHSSYIFIWLQLELCAMAVLLTKGEIRCYCDAAHCVATGYMCKSELSACFSRLLDPQNSNSPLTHGCLDSLASTTDICQAKQARNHSGTTIPTLECCHEDMCNYRGLHDVLSPPRGEASGQGNRYQHDGSRNLITKVQELTSSKELWFRAAVIAVPIAGGLILVLLIMLALRMLRSENKRLQDQRQQMLSRLHYSFHGHHSKKGQVAKLDLECMVPVSGHENCCLTCDKMRQADLSNDKILSLVHWGMYSGHGKLEFV.

Positions 1–20 (MDRHSSYIFIWLQLELCAMA) are cleaved as a signal peptide. The Extracellular segment spans residues 21 to 152 (VLLTKGEIRC…TSSKELWFRA (132 aa)). Residue N87 is glycosylated (N-linked (GlcNAc...) asparagine). A helical membrane pass occupies residues 153-173 (AVIAVPIAGGLILVLLIMLAL). Over 174-260 (RMLRSENKRL…YSGHGKLEFV (87 aa)) the chain is Cytoplasmic.

The protein belongs to the BAMBI family. In terms of tissue distribution, high expression in kidney medulla, placenta and spleen; low in kidney cortex, liver, prostate and gut. Not expressed in normal skin, expression is high in melanocytes and in 3 out of 11 melanoma metastases tested.

Its subcellular location is the membrane. Functionally, negatively regulates TGF-beta signaling. The protein is BMP and activin membrane-bound inhibitor homolog (BAMBI) of Homo sapiens (Human).